A 166-amino-acid chain; its full sequence is 2-C-methyl-D-erythritol 2,4-cyclodiphosphate synthase (166 aa).

Residues aspartate 11 and histidine 13 each coordinate a divalent metal cation. Residues aspartate 11–histidine 13 and histidine 40–serine 41 each bind 4-CDP-2-C-methyl-D-erythritol 2-phosphate. Histidine 48 serves as a coordination point for a divalent metal cation. 4-CDP-2-C-methyl-D-erythritol 2-phosphate is bound by residues aspartate 62–glycine 64, threonine 135–aspartate 138, phenylalanine 142, and arginine 145.

Belongs to the IspF family. In terms of assembly, homotrimer. A divalent metal cation is required as a cofactor.

It catalyses the reaction 4-CDP-2-C-methyl-D-erythritol 2-phosphate = 2-C-methyl-D-erythritol 2,4-cyclic diphosphate + CMP. The protein operates within isoprenoid biosynthesis; isopentenyl diphosphate biosynthesis via DXP pathway; isopentenyl diphosphate from 1-deoxy-D-xylulose 5-phosphate: step 4/6. Functionally, involved in the biosynthesis of isopentenyl diphosphate (IPP) and dimethylallyl diphosphate (DMAPP), two major building blocks of isoprenoid compounds. Catalyzes the conversion of 4-diphosphocytidyl-2-C-methyl-D-erythritol 2-phosphate (CDP-ME2P) to 2-C-methyl-D-erythritol 2,4-cyclodiphosphate (ME-CPP) with a corresponding release of cytidine 5-monophosphate (CMP). The protein is 2-C-methyl-D-erythritol 2,4-cyclodiphosphate synthase of Pseudarthrobacter chlorophenolicus (strain ATCC 700700 / DSM 12829 / CIP 107037 / JCM 12360 / KCTC 9906 / NCIMB 13794 / A6) (Arthrobacter chlorophenolicus).